The following is a 256-amino-acid chain: Thiazole synthase (256 aa).

Lys-95 serves as the catalytic Schiff-base intermediate with DXP. 1-deoxy-D-xylulose 5-phosphate contacts are provided by residues Gly-156, 182 to 183, and 204 to 205; these read AG and NT.

The protein belongs to the ThiG family. As to quaternary structure, homotetramer. Forms heterodimers with either ThiH or ThiS.

The protein localises to the cytoplasm. The enzyme catalyses [ThiS sulfur-carrier protein]-C-terminal-Gly-aminoethanethioate + 2-iminoacetate + 1-deoxy-D-xylulose 5-phosphate = [ThiS sulfur-carrier protein]-C-terminal Gly-Gly + 2-[(2R,5Z)-2-carboxy-4-methylthiazol-5(2H)-ylidene]ethyl phosphate + 2 H2O + H(+). It participates in cofactor biosynthesis; thiamine diphosphate biosynthesis. Catalyzes the rearrangement of 1-deoxy-D-xylulose 5-phosphate (DXP) to produce the thiazole phosphate moiety of thiamine. Sulfur is provided by the thiocarboxylate moiety of the carrier protein ThiS. In vitro, sulfur can be provided by H(2)S. This is Thiazole synthase from Escherichia coli O17:K52:H18 (strain UMN026 / ExPEC).